Reading from the N-terminus, the 476-residue chain is Aspartyl/glutamyl-tRNA(Asn/Gln) amidotransferase subunit B (476 aa).

This sequence belongs to the GatB/GatE family. GatB subfamily. Heterotrimer of A, B and C subunits.

It catalyses the reaction L-glutamyl-tRNA(Gln) + L-glutamine + ATP + H2O = L-glutaminyl-tRNA(Gln) + L-glutamate + ADP + phosphate + H(+). The enzyme catalyses L-aspartyl-tRNA(Asn) + L-glutamine + ATP + H2O = L-asparaginyl-tRNA(Asn) + L-glutamate + ADP + phosphate + 2 H(+). Its function is as follows. Allows the formation of correctly charged Asn-tRNA(Asn) or Gln-tRNA(Gln) through the transamidation of misacylated Asp-tRNA(Asn) or Glu-tRNA(Gln) in organisms which lack either or both of asparaginyl-tRNA or glutaminyl-tRNA synthetases. The reaction takes place in the presence of glutamine and ATP through an activated phospho-Asp-tRNA(Asn) or phospho-Glu-tRNA(Gln). This Latilactobacillus sakei subsp. sakei (strain 23K) (Lactobacillus sakei subsp. sakei) protein is Aspartyl/glutamyl-tRNA(Asn/Gln) amidotransferase subunit B.